Consider the following 447-residue polypeptide: Argininosuccinate synthase (447 aa).

Residues 17-25 (AFSGGLDTS) and A43 contribute to the ATP site. Y99 contributes to the L-citrulline binding site. The ATP site is built by G129 and T131. T131, N135, and D136 together coordinate L-aspartate. N135 serves as a coordination point for L-citrulline. Position 136 (D136) interacts with ATP. Positions 139 and 192 each coordinate L-citrulline. D194 contributes to the ATP binding site. The L-citrulline site is built by T201, E203, and E280.

This sequence belongs to the argininosuccinate synthase family. Type 2 subfamily. Homotetramer.

The protein localises to the cytoplasm. The enzyme catalyses L-citrulline + L-aspartate + ATP = 2-(N(omega)-L-arginino)succinate + AMP + diphosphate + H(+). Its pathway is amino-acid biosynthesis; L-arginine biosynthesis; L-arginine from L-ornithine and carbamoyl phosphate: step 2/3. The protein is Argininosuccinate synthase of Paracidovorax citrulli (strain AAC00-1) (Acidovorax citrulli).